We begin with the raw amino-acid sequence, 306 residues long: Probable 2-dehydro-3-deoxygalactonokinase DgoK1 (306 aa).

It belongs to the DgoK family.

The enzyme catalyses 2-dehydro-3-deoxy-D-galactonate + ATP = 2-dehydro-3-deoxy-6-phospho-D-galactonate + ADP + H(+). It participates in carbohydrate acid metabolism; D-galactonate degradation; D-glyceraldehyde 3-phosphate and pyruvate from D-galactonate: step 2/3. Involved in the degradation of galactose via the DeLey-Doudoroff pathway. The protein is Probable 2-dehydro-3-deoxygalactonokinase DgoK1 (dgoK1) of Rhizobium meliloti (strain 1021) (Ensifer meliloti).